Reading from the N-terminus, the 180-residue chain is ATP-dependent protease subunit HslV (180 aa).

Threonine 8 is an active-site residue. Positions 165, 168, and 171 each coordinate Na(+).

It belongs to the peptidase T1B family. HslV subfamily. In terms of assembly, a double ring-shaped homohexamer of HslV is capped on each side by a ring-shaped HslU homohexamer. The assembly of the HslU/HslV complex is dependent on binding of ATP.

The protein resides in the cytoplasm. It catalyses the reaction ATP-dependent cleavage of peptide bonds with broad specificity.. Its activity is regulated as follows. Allosterically activated by HslU binding. Its function is as follows. Protease subunit of a proteasome-like degradation complex believed to be a general protein degrading machinery. The sequence is that of ATP-dependent protease subunit HslV from Macrococcus caseolyticus (strain JCSC5402) (Macrococcoides caseolyticum).